We begin with the raw amino-acid sequence, 387 residues long: Alpha-maltose-1-phosphate synthase (387 aa).

It belongs to the glycosyltransferase group 1 family.

The catalysed reaction is ADP-alpha-D-glucose + alpha-D-glucose 1-phosphate = alpha-maltose 1-phosphate + ADP + H(+). Its pathway is capsule biogenesis; capsule polysaccharide biosynthesis. It participates in glycan biosynthesis; glycogen biosynthesis. Involved in the biosynthesis of the maltose-1-phosphate (M1P) building block required for alpha-glucan production by the key enzyme GlgE. Catalyzes the formation of an alpha-1,4 linkage between glucose from ADP-glucose and glucose 1-phosphate (G1P) to yield maltose-1-phosphate (M1P). The protein is Alpha-maltose-1-phosphate synthase of Mycobacterium tuberculosis (strain CDC 1551 / Oshkosh).